The following is a 158-amino-acid chain: 6,7-dimethyl-8-ribityllumazine synthase (158 aa).

5-amino-6-(D-ribitylamino)uracil-binding positions include Phe22, 56–58 (ALE), and 80–82 (VVI). Position 85–86 (85–86 (ET)) interacts with (2S)-2-hydroxy-3-oxobutyl phosphate. The Proton donor role is filled by His88. Asn113 is a 5-amino-6-(D-ribitylamino)uracil binding site. Residue Arg127 coordinates (2S)-2-hydroxy-3-oxobutyl phosphate.

This sequence belongs to the DMRL synthase family.

It carries out the reaction (2S)-2-hydroxy-3-oxobutyl phosphate + 5-amino-6-(D-ribitylamino)uracil = 6,7-dimethyl-8-(1-D-ribityl)lumazine + phosphate + 2 H2O + H(+). Its pathway is cofactor biosynthesis; riboflavin biosynthesis; riboflavin from 2-hydroxy-3-oxobutyl phosphate and 5-amino-6-(D-ribitylamino)uracil: step 1/2. Its function is as follows. Catalyzes the formation of 6,7-dimethyl-8-ribityllumazine by condensation of 5-amino-6-(D-ribitylamino)uracil with 3,4-dihydroxy-2-butanone 4-phosphate. This is the penultimate step in the biosynthesis of riboflavin. The protein is 6,7-dimethyl-8-ribityllumazine synthase of Neisseria gonorrhoeae (strain ATCC 700825 / FA 1090).